The following is a 164-amino-acid chain: C-type natriuretic peptide (164 aa).

The N-terminal stretch at 1–23 is a signal peptide; that stretch reads MVASRLAAGGLLLLALLALALDG. Disordered regions lie at residues 24–93 and 115–134; these read KPAP…AAAA and HPEH…GASR. A propeptide spanning residues 24–142 is cleaved from the precursor; sequence KPAPPQPLRK…SRRLKGVAKK (119 aa). Positions 58-67 are enriched in gly residues; it reads AGGGGGGGRS. Residues 68 to 93 show a composition bias toward low complexity; the sequence is GSKAANAAPTAPKSKGGAAAAAAAAA. A compositionally biased stretch (gly residues) spans 121-132; it reads GGGGGGGGGGGA. Cysteines 148 and 164 form a disulfide.

This sequence belongs to the natriuretic peptide family. Expressed by the venom gland.

It is found in the secreted. Snake venom natriuretic peptide that has a vasorelaxant activity in rat aortic strips and a diuretic potency in anesthetized rats. May act by activating natriuretic receptors (NPR1 and/or NPR2). The protein is C-type natriuretic peptide of Philodryas olfersii (Green snake).